A 416-amino-acid chain; its full sequence is Deferrochelatase (416 aa).

Positions 1–28 (MSDEQKKPEQIHRRDILKWGAMAGAAVA) form a signal peptide, tat-type signal. 241 to 243 (GTG) is a binding site for heme b. The segment at 293 to 318 (QEDTFGRRKSSGAPFGQKKETDPVKL) is disordered. Residues His-326 and Arg-339 each coordinate heme b.

Belongs to the DyP-type peroxidase family. Component of the iron transporter efeUOB/M complex composed of EfeU, EfeM and EfeB; EfeU is essential for the complex formation. Requires heme b as cofactor. In terms of processing, exported by the Tat system. The position of the signal peptide cleavage has not been experimentally proven.

Its subcellular location is the secreted. It is found in the cell membrane. It catalyses the reaction heme b + 2 H(+) = protoporphyrin IX + Fe(2+). The enzyme catalyses 2 Fe(2+) + H2O2 + 2 H(+) = 2 Fe(3+) + 2 H2O. Its function is as follows. Involved in the recovery of exogenous heme iron. Extracts iron from heme while preserving the protoporphyrin ring intact. Part of the iron transporter system efeUOB/M involved in iron import. Catalyzes the peroxide-mediated oxidation of Fe(2+) into Fe(3+); EfeM binds Fe(3+) and delivers it to the cell membrane permease EfeU. In Bacillus subtilis (strain 168), this protein is Deferrochelatase.